Reading from the N-terminus, the 206-residue chain is Accelerated cell death 11 (206 aa).

Asp-60, Lys-64, Arg-99, Arg-103, and His-143 together coordinate an N-acylsphingoid base 1-phosphate.

Belongs to the GLTP family. As to quaternary structure, interacts with BPA1, PRA1F2 and PRA1F3.

Its subcellular location is the cytoplasm. Its function is as follows. Exhibits selective intermembrane transfer of ceramide-1-phosphate (C1P) and phytoceramide-1-phosphate. Does not transport ceramide (Cer) or GalCer, suggesting a requirement for phosphate in the headgroup for functionality. Transports in vitro sphingosine, but not glycosphingolipids. Also has some in vitro activity with sphingomyelin, a lipid not detected in plant tissues. The transport function may be not directly involved in regulating cell death. Rather, perturbations in the function of ACD11 or related components could be monitored by R-proteins, which then mediate defense and programmed cell death (PCD), as proposed in the guard hypothesis. C1P transfer is stimulated by phosphatidylserine in C1P source vesicles. Regulates autophagy, inflammasome mediated IL1B and IL18 processing, and pyroptosis, but not apoptosis. This is Accelerated cell death 11 from Arabidopsis thaliana (Mouse-ear cress).